A 206-amino-acid chain; its full sequence is Musculin (206 aa).

Residues methionine 1–arginine 115 form a disordered region. Positions serine 46 to glutamate 56 are enriched in acidic residues. A Nuclear localization signal motif is present at residues lysine 71–arginine 76. The segment covering alanine 78–lysine 92 has biased composition (gly residues). Residues lysine 93–alanine 102 show a composition bias toward low complexity. The region spanning serine 107–leucine 159 is the bHLH domain.

As to quaternary structure, efficient DNA binding requires dimerization with another bHLH protein. Binds DNA as a homodimer or a heterodimer. Forms a heterodimer with TCF3. Expressed in lymphoid tissues, B-cell lines and activated B-cells.

Its subcellular location is the nucleus. In terms of biological role, transcription repressor capable of inhibiting the transactivation capability of TCF3/E47. May play a role in regulating antigen-dependent B-cell differentiation. In Homo sapiens (Human), this protein is Musculin (MSC).